Reading from the N-terminus, the 272-residue chain is Shikimate dehydrogenase (NADP(+)) (272 aa).

Shikimate contacts are provided by residues 14–16 (SKS) and threonine 61. Lysine 65 functions as the Proton acceptor in the catalytic mechanism. Glutamate 77 contributes to the NADP(+) binding site. Residues asparagine 86 and aspartate 102 each contribute to the shikimate site. NADP(+)-binding positions include 126 to 130 (GAGGA), 149 to 154 (NRTASR), and methionine 213. Residue tyrosine 215 participates in shikimate binding. An NADP(+)-binding site is contributed by glycine 237.

This sequence belongs to the shikimate dehydrogenase family. As to quaternary structure, homodimer.

The enzyme catalyses shikimate + NADP(+) = 3-dehydroshikimate + NADPH + H(+). It participates in metabolic intermediate biosynthesis; chorismate biosynthesis; chorismate from D-erythrose 4-phosphate and phosphoenolpyruvate: step 4/7. Functionally, involved in the biosynthesis of the chorismate, which leads to the biosynthesis of aromatic amino acids. Catalyzes the reversible NADPH linked reduction of 3-dehydroshikimate (DHSA) to yield shikimate (SA). The protein is Shikimate dehydrogenase (NADP(+)) of Salmonella schwarzengrund (strain CVM19633).